Reading from the N-terminus, the 284-residue chain is Protoheme IX farnesyltransferase (284 aa).

9 helical membrane-spanning segments follow: residues 2-19 (SLVVFTALVGLLVAPVTV), 23-45 (IALTGILFIALGAGASGALNMWS), 69-89 (GEALGIGLALSGIAVVMLGLA), 92-112 (LFAAGLLAFTIFFYAVVYSMW), 121-141 (IVIGGAAGAFPPMIGWAVATG), 148-168 (LFMFALIFMWTPPHFWSLALF), 194-214 (VLVYSLLLAPLAVAGAFTGTG), 217-237 (LYLATALALNGWLLVGAVRTW), and 263-283 (LFLHFGAILAEAALKPYGLGG).

This sequence belongs to the UbiA prenyltransferase family. Protoheme IX farnesyltransferase subfamily. In terms of assembly, interacts with CtaA.

The protein localises to the cell inner membrane. It catalyses the reaction heme b + (2E,6E)-farnesyl diphosphate + H2O = Fe(II)-heme o + diphosphate. Its pathway is porphyrin-containing compound metabolism; heme O biosynthesis; heme O from protoheme: step 1/1. Functionally, converts heme B (protoheme IX) to heme O by substitution of the vinyl group on carbon 2 of heme B porphyrin ring with a hydroxyethyl farnesyl side group. The chain is Protoheme IX farnesyltransferase from Cereibacter sphaeroides (Rhodobacter sphaeroides).